A 159-amino-acid chain; its full sequence is MNIKIITVGKLKEKYLKAGIAEYAKRLSKFCKFEIIEVSDEKAPESLSEAEMTTVKDKEGERILAKVKDKEHVIVLAIHGKQRASEEFAKEIQDLATYGTSDITFIIGGSLGTSDAVNKRANDALSFGKLTLPHQLMRLVLTEQIYRAFMINQGSPYHK.

Residues Leu-76, Gly-108, and 127-132 each bind S-adenosyl-L-methionine; that span reads FGKLTL.

The protein belongs to the RNA methyltransferase RlmH family. In terms of assembly, homodimer.

It is found in the cytoplasm. The catalysed reaction is pseudouridine(1915) in 23S rRNA + S-adenosyl-L-methionine = N(3)-methylpseudouridine(1915) in 23S rRNA + S-adenosyl-L-homocysteine + H(+). Specifically methylates the pseudouridine at position 1915 (m3Psi1915) in 23S rRNA. The protein is Ribosomal RNA large subunit methyltransferase H of Latilactobacillus sakei subsp. sakei (strain 23K) (Lactobacillus sakei subsp. sakei).